Reading from the N-terminus, the 512-residue chain is Sodium-dependent phosphate transport protein 1, chloroplastic (512 aa).

The transit peptide at 1–59 directs the protein to the chloroplast; that stretch reads MNARALLCSSNIHSLYTSNRPPEKTSSSRSLRNLKPSPKSLRVWIYPRNRSSVFRVLVR. Transmembrane regions (helical) follow at residues 103-123, 141-161, 171-191, 192-212, 234-254, 257-277, 323-343, 361-381, 401-421, 453-473, and 486-506; these read WVIV…RVNM, VGLI…AGGI, VLGF…VAAK, LGLP…GVAM, LVYS…PFLI, FGWP…LTLW, VWAL…LLTW, LLSV…GWIA, IGFL…SPTM, GVLL…GTAA, and VFTI…LFST.

It belongs to the major facilitator superfamily. Sodium/anion cotransporter (TC 2.A.1.14) family. In terms of tissue distribution, expressed in flower buds, sepals of mature flowers and mature leaves, less in senescent leaves and at low levels in roots.

Its subcellular location is the plastid. It localises to the chloroplast thylakoid membrane. In terms of biological role, specific for inorganic phosphate transport across the thylakoid membrane in a sodium dependent manner. Binds glutamate but cannot transport it. May act as an ascorbate transporter at the thylakoid membrane. This chain is Sodium-dependent phosphate transport protein 1, chloroplastic (ANTR1), found in Arabidopsis thaliana (Mouse-ear cress).